The primary structure comprises 325 residues: Centromere protein O (325 aa).

Residues 1 to 35 (MEEERNSDEKENALCGRSLTAASRDGGGRMPAAPL) are disordered. The stretch at 55–112 (LEMLEAQAHELGLKQEEKEQQEKKLDRLKARVQELRARRDELRAKVELQEKRLLDKEG) forms a coiled coil.

It belongs to the CENP-O/MCM21 family. As to quaternary structure, component of the CENPA-HI complex, at least composed of CENPH, CENPI, CENPK, CENPL, CENPM, CENPO and CENPP. Component of a discrete complex composed of at least CENPO, CENPP, CENPQ, CENPR and CENPU.

The protein resides in the nucleus. It localises to the chromosome. The protein localises to the centromere. Its function is as follows. Component of the CENPA-HI complex, a centromeric complex involved in assembly of kinetochore proteins, mitotic progression and chromosome segregation. Involved in kinetochore assembly and required for recovery from spindle damage. This Gallus gallus (Chicken) protein is Centromere protein O (CENPO).